Reading from the N-terminus, the 131-residue chain is Peptidyl-prolyl cis-trans isomerase NIMA-interacting 4 (131 aa).

Residues 1–25 (MPPKGKSGSGKGGKGGAASGSDSAD) form a necessary for nuclear localization and DNA-binding region. Positions 1–39 (MPPKGKSGSGKGGKGGAASGSDSADKKSQGPKGGGNAVK) are disordered. Residues 1 to 41 (MPPKGKSGSGKGGKGGAASGSDSADKKSQGPKGGGNAVKVR) form a necessary for association with the pre-rRNP complexes region. Residues 7–18 (SGSGKGGKGGAA) are compositionally biased toward gly residues. Ser19 carries the post-translational modification Phosphoserine; by CK2. The 95-residue stretch at 35 to 129 (GNAVKVRHIL…FGYHIIMVEG (95 aa)) folds into the PpiC domain.

It belongs to the PpiC/parvulin rotamase family. PIN4 subfamily. Found in pre-ribosomal ribonucleoprotein (pre-rRNP) complexes. Phosphorylated. Phosphorylation occurs both in the nucleus and the cytoplasm. Phosphorylation at Ser-19 does not affect its PPIase activity but is required for nuclear localization, and the dephosphorylation is a prerequisite for the binding to DNA. The unphosphorylated form associates with the pre-rRNP complexes in the nucleus.

It localises to the nucleus. The protein localises to the nucleolus. The protein resides in the cytoplasm. It is found in the cytoskeleton. Its subcellular location is the spindle. The catalysed reaction is [protein]-peptidylproline (omega=180) = [protein]-peptidylproline (omega=0). Its function is as follows. Involved as a ribosomal RNA processing factor in ribosome biogenesis. Binds to tightly bent AT-rich stretches of double-stranded DNA. The polypeptide is Peptidyl-prolyl cis-trans isomerase NIMA-interacting 4 (Pin4) (Mus musculus (Mouse)).